The sequence spans 85 residues: UPF0386 protein RHE_CH01859 (85 aa).

The protein belongs to the UPF0386 family.

The protein is UPF0386 protein RHE_CH01859 of Rhizobium etli (strain ATCC 51251 / DSM 11541 / JCM 21823 / NBRC 15573 / CFN 42).